A 153-amino-acid chain; its full sequence is Endoribonuclease YbeY (153 aa).

Zn(2+)-binding residues include His118, His122, and His128.

This sequence belongs to the endoribonuclease YbeY family. Zn(2+) serves as cofactor.

It localises to the cytoplasm. Its function is as follows. Single strand-specific metallo-endoribonuclease involved in late-stage 70S ribosome quality control and in maturation of the 3' terminus of the 16S rRNA. This chain is Endoribonuclease YbeY, found in Pelagibacter ubique (strain HTCC1062).